Reading from the N-terminus, the 453-residue chain is Allantoinase (453 aa).

Residues His-59, His-61, Lys-146, His-186, His-242, and Asp-315 each contribute to the Zn(2+) site. Lys-146 is modified (N6-carboxylysine).

Belongs to the metallo-dependent hydrolases superfamily. Allantoinase family. Homotetramer. Zn(2+) is required as a cofactor. Carboxylation allows a single lysine to coordinate two zinc ions.

It catalyses the reaction (S)-allantoin + H2O = allantoate + H(+). Its pathway is nitrogen metabolism; (S)-allantoin degradation; allantoate from (S)-allantoin: step 1/1. Functionally, catalyzes the conversion of allantoin (5-ureidohydantoin) to allantoic acid by hydrolytic cleavage of the five-member hydantoin ring. In Escherichia coli O9:H4 (strain HS), this protein is Allantoinase.